Consider the following 380-residue polypeptide: Proline iminopeptidase (380 aa).

The AB hydrolase-1 domain occupies 98-360 (PVVFLHGGPG…IVYDAGHSAN (263 aa)). The Nucleophile role is filled by Ser-172. Asp-329 is an active-site residue. The active-site Proton donor is His-357.

The protein belongs to the peptidase S33 family.

The protein localises to the cytoplasm. The catalysed reaction is Release of N-terminal proline from a peptide.. Its function is as follows. Specifically catalyzes the removal of N-terminal proline residues from peptides. The protein is Proline iminopeptidase (PIP) of Arabidopsis thaliana (Mouse-ear cress).